A 340-amino-acid chain; its full sequence is tRNA N6-adenosine threonylcarbamoyltransferase (340 aa).

Fe cation contacts are provided by H115 and H119. Substrate contacts are provided by residues 138–142, D171, G184, D188, and N278; that span reads VVSGG. D306 contributes to the Fe cation binding site.

The protein belongs to the KAE1 / TsaD family. Fe(2+) serves as cofactor.

It is found in the cytoplasm. The catalysed reaction is L-threonylcarbamoyladenylate + adenosine(37) in tRNA = N(6)-L-threonylcarbamoyladenosine(37) in tRNA + AMP + H(+). Its function is as follows. Required for the formation of a threonylcarbamoyl group on adenosine at position 37 (t(6)A37) in tRNAs that read codons beginning with adenine. Is involved in the transfer of the threonylcarbamoyl moiety of threonylcarbamoyl-AMP (TC-AMP) to the N6 group of A37, together with TsaE and TsaB. TsaD likely plays a direct catalytic role in this reaction. This is tRNA N6-adenosine threonylcarbamoyltransferase from Clostridium botulinum (strain Kyoto / Type A2).